Consider the following 104-residue polypeptide: UPF0145 protein cbdbA1711 (104 aa).

It belongs to the UPF0145 family.

This is UPF0145 protein cbdbA1711 from Dehalococcoides mccartyi (strain CBDB1).